Here is a 555-residue protein sequence, read N- to C-terminus: Neutral amino acid transporter B(0) (555 aa).

N-acetylmethionine is present on M1. Over 1–52 the chain is Cytoplasmic; the sequence is MAVDPPKADPKGVVAVDPTANCGSGLKSREDQGAKAGGCCSSRDQVCRCLRA. A helical transmembrane segment spans residues 53-82; the sequence is NLLVLLTVAAAVAGVVLGLGVSAAGGAEAL. Over 83–95 the chain is Extracellular; sequence GHARFTAFAFPGE. A helical transmembrane segment spans residues 96–117; the sequence is LLLRLLEMIILPLVVCSLIGGA. Topologically, residues 118–131 are cytoplasmic; the sequence is ASLDPSALGRLGAW. A helical membrane pass occupies residues 132-154; the sequence is ALLFFLVTTLLSSALGVALALAL. Topologically, residues 155–239 are extracellular; sequence KPGAAFAAIN…SNATMDQPHC (85 aa). 2 N-linked (GlcNAc...) asparagine glycosylation sites follow: N164 and N231. Residues 240–262 traverse the membrane as a helical segment; that stretch reads EMKMNILGLVVFAIVFGVALRKL. Residues 263–271 are Cytoplasmic-facing; it reads GPEGELLIR. The chain crosses the membrane as a helical span at residues 272–299; that stretch reads FFNSFNDATMVLVSWIMWYAPIGILFLV. Residues 300-320 lie on the Extracellular side of the membrane; that stretch reads AGKIVEMKDIRQLFIGLGKYI. The chain crosses the membrane as a helical span at residues 321–342; it reads VCCLLGHAIHGLLVLPLIYFLF. At 343–347 the chain is on the cytoplasmic side; the sequence is TRKNP. The discontinuously helical intramembrane region spans 348-378; sequence YRFLWGIVTPLATAFGTSSSSATLPLMMKCV. Residues 379 to 387 lie on the Cytoplasmic side of the membrane; it reads EEKNGVAKH. Residues 388-414 form a helical membrane-spanning segment; that stretch reads ISRFILPIGATVNMDGAALFQCVAAVF. Na(+) is bound by residues G396, T398, and N400. Topologically, residues 415-427 are extracellular; it reads IAQLNGMSLDFVK. Residues 428-461 constitute an intramembrane region (discontinuously helical); the sequence is IITILVTATASSVGAAGIPAGGVLTLAIILEAIS. Residues 462-474 lie on the Extracellular side of the membrane; it reads LPVKDISLILAVD. A helical transmembrane segment spans residues 475 to 496; the sequence is WLVDRSCTVLNVEGDAFGAGLL. Positions 485 and 489 each coordinate Na(+). At 497 to 555 the chain is on the cytoplasmic side; it reads QSYVDRTKMPSSEPELIQVKNDVSLKPLPLATEEGNPLLKQCREPSGDSSATCEKESVM. A phosphoserine mark is found at S507, S508, S520, S545, and S553. Positions 534–555 are disordered; sequence LLKQCREPSGDSSATCEKESVM.

This sequence belongs to the dicarboxylate/amino acid:cation symporter (DAACS) (TC 2.A.23) family. As to quaternary structure, homotrimer.

Its subcellular location is the cell membrane. The protein localises to the melanosome. It carries out the reaction L-glutamine(out) + L-serine(in) + Na(+)(out) = L-glutamine(in) + L-serine(out) + Na(+)(in). It catalyses the reaction L-glutamine(in) + L-serine(out) + Na(+)(out) = L-glutamine(out) + L-serine(in) + Na(+)(in). The enzyme catalyses L-threonine(in) + L-glutamine(out) + Na(+)(out) = L-threonine(out) + L-glutamine(in) + Na(+)(in). The catalysed reaction is L-threonine(out) + L-glutamine(in) + Na(+)(out) = L-threonine(in) + L-glutamine(out) + Na(+)(in). It carries out the reaction L-asparagine(in) + L-glutamine(out) + Na(+)(out) = L-asparagine(out) + L-glutamine(in) + Na(+)(in). It catalyses the reaction L-asparagine(out) + L-glutamine(in) + Na(+)(out) = L-asparagine(in) + L-glutamine(out) + Na(+)(in). The enzyme catalyses L-glutamine(in) + L-alanine(out) + Na(+)(out) = L-glutamine(out) + L-alanine(in) + Na(+)(in). The catalysed reaction is L-valine(out) + L-glutamine(in) + Na(+)(out) = L-valine(in) + L-glutamine(out) + Na(+)(in). It carries out the reaction L-glutamine(in) + L-methionine(out) + Na(+)(out) = L-glutamine(out) + L-methionine(in) + Na(+)(in). It catalyses the reaction L-glutamine(in) + L-glutamate(out) + Na(+)(out) + H(+)(out) = L-glutamine(out) + L-glutamate(in) + Na(+)(in) + H(+)(in). The enzyme catalyses D-serine(in) + L-glutamine(out) + Na(+)(out) = D-serine(out) + L-glutamine(in) + Na(+)(in). The catalysed reaction is D-serine(in) + L-alanine(out) + Na(+)(out) = D-serine(out) + L-alanine(in) + Na(+)(in). It carries out the reaction nitrate(in) = nitrate(out). It catalyses the reaction iodide(out) = iodide(in). The enzyme catalyses thiocyanate(in) = thiocyanate(out). With respect to regulation, down-regulated at acidic pH. In terms of biological role, sodium-coupled antiporter of neutral amino acids. In a tri-substrate transport cycle, exchanges neutral amino acids between the extracellular and intracellular compartments, coupled to the inward cotransport of at least one sodium ion. The preferred substrate is the essential amino acid L-glutamine, a precursor for biosynthesis of proteins, nucleotides and amine sugars as well as an alternative fuel for mitochondrial oxidative phosphorylation. Exchanges L-glutamine with other neutral amino acids such as L-serine, L-threonine and L-asparagine in a bidirectional way. Provides L-glutamine to proliferating stem and activated cells driving the metabolic switch toward cell differentiation. The transport cycle is usually pH-independent, with the exception of L-glutamate. Transports extracellular L-glutamate coupled to the cotransport of one proton and one sodium ion in exchange for intracellular L-glutamine counter-ion. May provide for L-glutamate uptake in glial cells regulating glutamine/glutamate cycle in the nervous system. Can transport D-amino acids. Mediates D-serine release from the retinal glia potentially affecting NMDA receptor function in retinal neurons. Displays sodium- and amino acid-dependent but uncoupled channel-like anion conductance with a preference SCN(-) &gt;&gt; NO3(-) &gt; I(-) &gt; Cl(-). Through binding of the fusogenic protein syncytin-1/ERVW-1 may mediate trophoblasts syncytialization, the spontaneous fusion of their plasma membranes, an essential process in placental development. The protein is Neutral amino acid transporter B(0) (Slc1a5) of Rattus norvegicus (Rat).